The following is a 147-amino-acid chain: Interleukin-4 (147 aa).

The N-terminal stretch at 1 to 24 is a signal peptide; the sequence is MGLPAQLPVTLLCLLAGTAHFIQG. Cysteines 48 and 88 form a disulfide. An N-linked (GlcNAc...) asparagine glycan is attached at Asn-62.

The protein belongs to the IL-4/IL-13 family.

It is found in the secreted. Participates in at least several B-cell activation processes as well as of other cell types. It is a costimulator of DNA-synthesis. It induces the expression of class II MHC molecules on resting B-cells. It enhances both secretion and cell surface expression of IgE and IgG1. It also regulates the expression of the low affinity Fc receptor for IgE (CD23) on both lymphocytes and monocytes. Positively regulates IL31RA expression in macrophages. Stimulates autophagy in dendritic cells by interfering with mTORC1 signaling and through the induction of RUFY4. The chain is Interleukin-4 (IL4) from Oryctolagus cuniculus (Rabbit).